Here is a 743-residue protein sequence, read N- to C-terminus: MPDPSTYRPATGTIPVDPGVYKFRDPHGRVIYVGKAKSLRSRLNSYFADVSTLHPRTRQMVTTAGSVEWTVVSTEVEALQLEYNWIKEFDPRFNVRYRDDKTYPVLAVTLNEEYPRLFVYRGPRRKGVRYFGPYSHAWAIRETLDLLLRVFPARTCSAGVFKRHNQIGRPCLLGYIDKCSAPCVGRVSAAEHRKIVEDFCDFLSGRTDKLVRQLEARMQQASEELDFETAARLRDDVGALRRALEKQAVVLGDGTDADVAAFATDELEAAVQVFHVRGGRVRGQRGWVVEKAGDVIDWAAVDSAAGSDLPLLVEQFLTQFYGEQAALSGAADQEAGSSGVPREVLVPVLPPDAEQVQEWLSGLRGSAVRLRVPQRGDKKALAETVQRNAMEALQQHKLRRAGDFTSRSAALQGIQEALDLDSAPLRIECVDISHVQGTDVVASLVVFEDGLPRKSDYRHYAIKEAAGDGRSDDVASIAEVTRRRFLRHNRDVGVLRAEAAGADGDQASDTDGDQVSDTDGDQVSGGDGGDLAPEAAIDPQTGRPRRFAYPPNLYVVDGGAPQVAAASAVLDELGITDVAVIGLAKRLEEVWVPGEEDPVILPRTSESLYLLQRVRDEAHRFAITFHRSKRSRRMTASALDSVRGLGETRRKALVTHFGSVAKLKQASVEEITAVPGIGTATAKAVLTALGAEEPSADVAGVGDDEPDRTGPVTAERNGADLPREPVGQHGPAAQSASQRTGVE.

A GIY-YIG domain is found at 16 to 95; it reads VDPGVYKFRD…IKEFDPRFNV (80 aa). The 36-residue stretch at 208 to 243 folds into the UVR domain; sequence DKLVRQLEARMQQASEELDFETAARLRDDVGALRRA. Disordered stretches follow at residues 497-543 and 694-743; these read AEAA…QTGR and PSAD…TGVE. A compositionally biased stretch (acidic residues) spans 506-520; it reads QASDTDGDQVSDTDG. Positions 734–743 are enriched in polar residues; sequence QSASQRTGVE.

It belongs to the UvrC family. In terms of assembly, interacts with UvrB in an incision complex.

Its subcellular location is the cytoplasm. In terms of biological role, the UvrABC repair system catalyzes the recognition and processing of DNA lesions. UvrC both incises the 5' and 3' sides of the lesion. The N-terminal half is responsible for the 3' incision and the C-terminal half is responsible for the 5' incision. This chain is UvrABC system protein C, found in Rhodococcus opacus (strain B4).